The primary structure comprises 707 residues: Protein SGM1 (707 aa).

The span at 1–11 (MSKKLSLEERL) shows a compositional bias: basic and acidic residues. A disordered region spans residues 1 to 52 (MSKKLSLEERLSLATKKGRKKNKRSTSNLSSPSPVVLSNNEQESARTSIDDA). Position 2 is an N-acetylserine (Ser-2). A compositionally biased stretch (low complexity) spans 27–40 (SNLSSPSPVVLSNN). A coiled-coil region spans residues 122-473 (VEELVKEISP…KPHQENSNEK (352 aa)). A phosphoserine mark is found at Ser-151, Ser-538, Ser-549, Ser-568, Ser-571, Ser-576, and Ser-589. Residues 594 to 706 (SAHLVNKLST…QQMVEMQGKM (113 aa)) are a coiled coil.

It belongs to the SGM1 family. In terms of assembly, interacts with YPT6.

Its subcellular location is the golgi apparatus. Its function is as follows. Required for normal growth rate on galactose and mannose. The protein is Protein SGM1 (SGM1) of Saccharomyces cerevisiae (strain ATCC 204508 / S288c) (Baker's yeast).